We begin with the raw amino-acid sequence, 282 residues long: Small ribosomal subunit protein uS2 (282 aa).

A disordered region spans residues 245–266; it reads AEEAVEELPLPTGEAQDEASSK.

Belongs to the universal ribosomal protein uS2 family.

The polypeptide is Small ribosomal subunit protein uS2 (rpsB) (Chlamydia trachomatis serovar D (strain ATCC VR-885 / DSM 19411 / UW-3/Cx)).